The primary structure comprises 503 residues: AMP phosphorylase (503 aa).

Residues glycine 168, 194–199 (SRAITS), and threonine 203 each bind AMP. Catalysis depends on aspartate 256, which acts as the Proton donor. AMP contacts are provided by serine 264 and lysine 288.

This sequence belongs to the thymidine/pyrimidine-nucleoside phosphorylase family. Type 2 subfamily.

The enzyme catalyses AMP + phosphate = alpha-D-ribose 1,5-bisphosphate + adenine. It carries out the reaction CMP + phosphate = cytosine + alpha-D-ribose 1,5-bisphosphate. The catalysed reaction is UMP + phosphate = alpha-D-ribose 1,5-bisphosphate + uracil. Its function is as follows. Catalyzes the conversion of AMP and phosphate to adenine and ribose 1,5-bisphosphate (R15P). Exhibits phosphorylase activity toward CMP and UMP in addition to AMP. Functions in an archaeal AMP degradation pathway, together with R15P isomerase and RubisCO. The protein is AMP phosphorylase of Methanocaldococcus jannaschii (strain ATCC 43067 / DSM 2661 / JAL-1 / JCM 10045 / NBRC 100440) (Methanococcus jannaschii).